Reading from the N-terminus, the 147-residue chain is Cyclic di-AMP receptor B (147 aa).

The region spanning Met18–Phe78 is the CBS domain. Residues Lys23, Ala25, Thr46, Ala47, and Arg131 each coordinate 3',3'-c-di-AMP.

Homodimer. Forms a homodimer with a parallel, head-to-head assembly of the monomers. Under conditions of potassium starvation and corresponding low c-di-AMP levels, apo-DarB specifically interacts with the N-terminal region of the RelA. Under the same conditions, apo-DarB also specifically interacts with the C-terminal part of the pyruvate carboxylase.

With respect to regulation, binds c-di-AMP. Binding of c-di-AMP to DarB inhibits the interaction with RelA and PYC. In terms of biological role, involved in the c-di-AMP-dependent regulation of the bacterial stringent response. Modulates the activities of at least two enzymes under conditions of potassium limitation. Apo-DarB regulates the activity of the GTP pyrophosphokinase RelA by interacting directly with RelA, leading to stimulation of (p)ppGpp synthesis and induction of the stringent response. Apo-DarB also regulates pyruvate carboxylase (PYC) at two levels: directly at the protein level by binding to the enzyme and stimulating the synthesis of oxaloacetate and indirectly, by interaction with RelA, which leads to activation of the stringent response and to the increased expression of the pycA gene. Stimulation of these enzymes by DarB is prevented in the presence of cyclic di-AMP (c-di-AMP). This chain is Cyclic di-AMP receptor B, found in Bacillus subtilis (strain 168).